A 257-amino-acid chain; its full sequence is Phosphate import ATP-binding protein PstB (257 aa).

The region spanning 4–246 is the ABC transporter domain; it reads LKLNDVNIYY…KKIFENPDQK (243 aa). 36 to 43 provides a ligand contact to ATP; it reads GPSGCGKS.

This sequence belongs to the ABC transporter superfamily. Phosphate importer (TC 3.A.1.7) family. In terms of assembly, the complex is composed of two ATP-binding proteins (PstB), two transmembrane proteins (PstC and PstA) and a solute-binding protein (PstS).

The protein resides in the cell membrane. It carries out the reaction phosphate(out) + ATP + H2O = ADP + 2 phosphate(in) + H(+). In terms of biological role, part of the ABC transporter complex PstSACB involved in phosphate import. Responsible for energy coupling to the transport system. This Corynebacterium glutamicum (strain ATCC 13032 / DSM 20300 / JCM 1318 / BCRC 11384 / CCUG 27702 / LMG 3730 / NBRC 12168 / NCIMB 10025 / NRRL B-2784 / 534) protein is Phosphate import ATP-binding protein PstB.